Here is a 338-residue protein sequence, read N- to C-terminus: NADPH dehydrogenase (338 aa).

Ser23–Cys26 is a binding site for FMN. Tyr28 contributes to the substrate binding site. Residues Ala60 and Gln102 each coordinate FMN. His164–His167 is a substrate binding site. FMN-binding positions include Arg215 and Gly307 to Arg308.

It belongs to the NADH:flavin oxidoreductase/NADH oxidase family. NamA subfamily. Homotetramer. The cofactor is FMN.

It carries out the reaction A + NADPH + H(+) = AH2 + NADP(+). Its function is as follows. Catalyzes the reduction of the double bond of an array of alpha,beta-unsaturated aldehydes and ketones. It also reduces the nitro group of nitroester and nitroaromatic compounds. It could have a role in detoxification processes. The sequence is that of NADPH dehydrogenase from Bacillus pumilus (strain SAFR-032).